Here is a 317-residue protein sequence, read N- to C-terminus: Phospho-N-acetylmuramoyl-pentapeptide-transferase (317 aa).

A run of 9 helical transmembrane segments spans residues L4–P24, T49–V69, A76–L96, M112–I132, L147–N167, F186–L206, I223–I243, L246–F266, and R297–L317.

The protein belongs to the glycosyltransferase 4 family. MraY subfamily. The cofactor is Mg(2+).

The protein resides in the cell membrane. The catalysed reaction is UDP-N-acetyl-alpha-D-muramoyl-L-alanyl-gamma-D-glutamyl-meso-2,6-diaminopimeloyl-D-alanyl-D-alanine + di-trans,octa-cis-undecaprenyl phosphate = di-trans,octa-cis-undecaprenyl diphospho-N-acetyl-alpha-D-muramoyl-L-alanyl-D-glutamyl-meso-2,6-diaminopimeloyl-D-alanyl-D-alanine + UMP. It participates in cell wall biogenesis; peptidoglycan biosynthesis. Its function is as follows. Catalyzes the initial step of the lipid cycle reactions in the biosynthesis of the cell wall peptidoglycan: transfers peptidoglycan precursor phospho-MurNAc-pentapeptide from UDP-MurNAc-pentapeptide onto the lipid carrier undecaprenyl phosphate, yielding undecaprenyl-pyrophosphoryl-MurNAc-pentapeptide, known as lipid I. The protein is Phospho-N-acetylmuramoyl-pentapeptide-transferase of Clostridium kluyveri (strain NBRC 12016).